Consider the following 389-residue polypeptide: Oxytocin receptor (389 aa).

The tract at residues 1–27 (MEGELAANWSTEAVNSSAAPPGAEGNC) is disordered. Residues 1–38 (MEGELAANWSTEAVNSSAAPPGAEGNCTAGPPRRNEAL) are Extracellular-facing. Asparagine 8, asparagine 15, and asparagine 26 each carry an N-linked (GlcNAc...) asparagine glycan. The segment covering 8–18 (NWSTEAVNSSA) has biased composition (polar residues). A helical transmembrane segment spans residues 39–63 (ARVEVAVLCLILFLALSGNACVLLA). Topologically, residues 64-74 (LRTTRHKHSRL) are cytoplasmic. The helical transmembrane segment at 75-97 (FFFMKHLSIADLVVAVFQVLPQL) threads the bilayer. Over 98-113 (LWDITFRFYGPDLLCR) the chain is Extracellular. The cysteines at positions 112 and 187 are disulfide-linked. The helical transmembrane segment at 114–135 (LVKYLQVVGMFASTYLLLLMSL) threads the bilayer. The Cytoplasmic segment spans residues 136-154 (DRCLAICQPLRSLRRRTDR). The helical transmembrane segment at 155–175 (LAVLATWLGCLVASAPQVHIF) threads the bilayer. The Extracellular segment spans residues 176 to 202 (SLREVADGVFDCWAVFIQPWGPKAYIT). The chain crosses the membrane as a helical span at residues 203–225 (WITLAVYIVPVIVLAACYGLISF). Topologically, residues 226-275 (KIWQNLRLKTAAAAAAEAPEGAAAGDGGRMALARVSSVKLISKAKIRTVK) are cytoplasmic. Residues 276–294 (MTFIIVLAFIVCWTPFFFV) form a helical membrane-spanning segment. At 295-309 (QMWSVWDANAPKEAS) the chain is on the extracellular side. A helical transmembrane segment spans residues 310–332 (AFIIVMLLASLNSCCNPWIYMLF). Residues 333-389 (TGHLFHELVQRFLCCSASYLKGNRLGETSTSKKSNSSSFVLSHRSSSQRSCSQPSTA) lie on the Cytoplasmic side of the membrane. The segment at 358 to 389 (GETSTSKKSNSSSFVLSHRSSSQRSCSQPSTA) is disordered. Residues 360–389 (TSTSKKSNSSSFVLSHRSSSQRSCSQPSTA) are compositionally biased toward low complexity. Residues serine 366 and serine 368 each carry the phosphoserine modification.

The protein belongs to the G-protein coupled receptor 1 family. Vasopressin/oxytocin receptor subfamily.

It localises to the cell membrane. Functionally, receptor for oxytocin. The activity of this receptor is mediated by G proteins which activate a phosphatidylinositol-calcium second messenger system. The protein is Oxytocin receptor (OXTR) of Macaca mulatta (Rhesus macaque).